A 247-amino-acid chain; its full sequence is Transcription factor bHLH92 (247 aa).

The region spanning 85–134 (ERSRRHMLKERTRREKQKQSYLALHSLLPFATKNDKNSIVEKAVDEIAKL) is the bHLH domain.

In terms of assembly, homodimer.

Its subcellular location is the nucleus. This is Transcription factor bHLH92 (BHLH92) from Arabidopsis thaliana (Mouse-ear cress).